A 507-amino-acid chain; its full sequence is Maturase K (507 aa).

Belongs to the intron maturase 2 family. MatK subfamily.

It is found in the plastid. The protein resides in the chloroplast. Its function is as follows. Usually encoded in the trnK tRNA gene intron. Probably assists in splicing its own and other chloroplast group II introns. The protein is Maturase K of Browningia hertlingiana (Cactus).